The following is a 477-amino-acid chain: 3-succinoylsemialdehyde-pyridine dehydrogenase (477 aa).

An NAD(+)-binding site is contributed by 202-208 (GDGPGVG). Residues Glu-246 and Cys-280 contribute to the active site.

This sequence belongs to the aldehyde dehydrogenase family.

The catalysed reaction is 4-oxo-4-(pyridin-3-yl)butanal + NADP(+) + H2O = 4-oxo-4-(pyridin-3-yl)butanoate + NADPH + 2 H(+). It participates in alkaloid degradation; nicotine degradation. In terms of biological role, catalyzes the dehydrogenation of 3-succinoylsemialdehyde-pyridine to 3-succinoyl-pyridine in the nicotine degradation pathway. The polypeptide is 3-succinoylsemialdehyde-pyridine dehydrogenase (ald) (Pseudomonas sp).